The sequence spans 959 residues: General transcription factor II-I repeat domain-containing protein 1 (959 aa).

Residues Lys27 and Lys94 each participate in a glycyl lysine isopeptide (Lys-Gly) (interchain with G-Cter in SUMO2) cross-link. Basic and acidic residues predominate over residues Pro96–Arg106. A disordered region spans residues Pro96–Ser117. A GTF2I-like 1 repeat occupies Leu119 to Ala213. Glycyl lysine isopeptide (Lys-Gly) (interchain with G-Cter in SUMO2) cross-links involve residues Lys184, Lys212, Lys225, Lys238, Lys271, Lys294, Lys308, Lys337, Lys436, Lys439, and Lys443. A disordered region spans residues Cys230–Ser250. The GTF2I-like 2 repeat unit spans residues Ile342–Lys436. Ser448 carries the post-translational modification Phosphoserine. Positions Asn468–Arg492 are disordered. A GTF2I-like 3 repeat occupies Asp556 to Pro650. Glycyl lysine isopeptide (Lys-Gly) (interchain with G-Cter in SUMO2) cross-links involve residues Lys567, Lys579, Lys588, Lys622, Lys638, and Lys648. Ser654 carries the phosphoserine modification. The tract at residues Ser654–Val679 is disordered. Residues Pro669, Pro670, Asp680, and Lys684 each participate in a glycyl lysine isopeptide (Lys-Gly) (interchain with G-Cter in SUMO2) cross-link. Residue Gln686 is modified to Phosphoserine. GTF2I-like repeat units lie at residues Leu696–Glu790 and Ala793–Asp887. Glycyl lysine isopeptide (Lys-Gly) (interchain with G-Cter in SUMO2) cross-links involve residues Ile701, Lys724, Lys732, Lys772, Lys774, Lys787, Lys829, Lys889, and Lys893. The segment at Ala892–Ser927 is disordered. A Nuclear localization signal motif is present at residues Pro898–Val905. Over residues Ser910–Ser923 the composition is skewed to low complexity.

This sequence belongs to the TFII-I family. In terms of assembly, interacts with the retinoblastoma protein (RB1) via its C-terminus. In terms of tissue distribution, highly expressed in adult skeletal muscle, heart, fibroblast, bone and fetal tissues. Expressed at lower levels in all other tissues tested.

The protein resides in the nucleus. Functionally, may be a transcription regulator involved in cell-cycle progression and skeletal muscle differentiation. May repress GTF2I transcriptional functions, by preventing its nuclear residency, or by inhibiting its transcriptional activation. May contribute to slow-twitch fiber type specificity during myogenesis and in regenerating muscles. Binds troponin I slow-muscle fiber enhancer (USE B1). Binds specifically and with high affinity to the EFG sequences derived from the early enhancer of HOXC8. This Homo sapiens (Human) protein is General transcription factor II-I repeat domain-containing protein 1 (GTF2IRD1).